The following is a 648-amino-acid chain: Solute carrier family 23 member 2 (648 aa).

The disordered stretch occupies residues 1–21; the sequence is MMGIGKNTASKSVEAGGSTEG. The Cytoplasmic portion of the chain corresponds to 9–110; that stretch reads ASKSVEAGGS…LCIFLGLQHY (102 aa). Residue Ser70 is modified to Phosphoserine. Thr75 is modified (phosphothreonine). Ser78 carries the phosphoserine modification. At Thr79 the chain carries Phosphothreonine. Position 81 is a phosphoserine (Ser81). Residues 111–131 form a helical membrane-spanning segment; sequence LTCFSGTIAVPFLLADAMCVG. Residues 132–139 lie on the Extracellular side of the membrane; sequence DDQWATSQ. A helical membrane pass occupies residues 140–160; that stretch reads LIGTIFFCVGITTLLQTTFGC. A topological domain (cytoplasmic) is located at residue Arg161. The chain crosses the membrane as a helical span at residues 162–182; that stretch reads LPLFQASAFAFLAPARAILSL. Residues 183–216 are Extracellular-facing; the sequence is DKWKCNTTEITVANGTAELLEHIWHPRIQEIQGA. 2 N-linked (GlcNAc...) asparagine glycosylation sites follow: Asn188 and Asn196. Residues 217-237 traverse the membrane as a helical segment; that stretch reads IIMSSLIEVVIGLLGLPGALL. At 238–264 the chain is on the cytoplasmic side; the sequence is RYIGPLTITPTVALIGLSGFQAAGERA. The chain crosses the membrane as a helical span at residues 265–282; that stretch reads GKHWGIAMLTIFLVLLFS. The Extracellular portion of the chain corresponds to 283-286; it reads QYAR. The segment at residues 287-300 is an intramembrane region (helical); the sequence is NVKFPLPIYKSKKG. The Extracellular portion of the chain corresponds to 301–307; that stretch reads WTAYKFQ. A helical membrane pass occupies residues 308–328; that stretch reads LFKMFPIILAILVSWLLCFIF. Over 329–369 the chain is Cytoplasmic; the sequence is TVTDVFPSNSTDYGYYARTDARKGVLLVAPWFKVPYPFQWG. Residues 370 to 390 form a helical membrane-spanning segment; sequence MPTVSAAGVIGMLSAVVASII. Residues 391-415 are Extracellular-facing; the sequence is ESIGDYYACARLSCAPPPPIHAINR. The chain crosses the membrane as a helical span at residues 416 to 436; sequence GIFVEGLSCVLDGIFGTGNGS. The Cytoplasmic portion of the chain corresponds to 437–459; that stretch reads TSSSPNIGVLGITKVGSRRVIQY. A helical transmembrane segment spans residues 460 to 480; sequence GAALMLGLGMVGKFSALFASL. The Extracellular segment spans residues 481 to 483; that stretch reads PDP. A helical membrane pass occupies residues 484–504; the sequence is VLGALFCTLFGMITAVGLSNL. The Cytoplasmic segment spans residues 505 to 514; that stretch reads QFIDLNSSRN. The helical transmembrane segment at 515–535 threads the bilayer; it reads LFVLGFSIFFGLVLPSYLRQN. The Extracellular portion of the chain corresponds to 536–545; it reads PLVTGITGID. The helical transmembrane segment at 546-566 threads the bilayer; it reads QILNVLLTTAMFVGGCVAFIL. The Cytoplasmic portion of the chain corresponds to 567–648; sequence DNTIPGTPEE…SSDKDSQATV (82 aa). Phosphothreonine is present on Thr647.

Belongs to the nucleobase:cation symporter-2 (NCS2) (TC 2.A.40) family. As to quaternary structure, interacts with CLSTN3. Post-translationally, phosphorylated. Expressed in metabolically active and specialized tissues, including high expression in brain and adrenals. Detected in a wide range of tissues. Expression in kidney is almost undetectable.

The protein resides in the cell membrane. It carries out the reaction L-ascorbate(out) + 2 Na(+)(out) = L-ascorbate(in) + 2 Na(+)(in). Its function is as follows. Sodium/ascorbate cotransporter. Mediates electrogenic uptake of vitamin C, with a stoichiometry of 2 Na(+) for each ascorbate. The sequence is that of Solute carrier family 23 member 2 (Slc23a2) from Mus musculus (Mouse).